Consider the following 260-residue polypeptide: Indole-3-glycerol phosphate synthase (260 aa).

This sequence belongs to the TrpC family.

It catalyses the reaction 1-(2-carboxyphenylamino)-1-deoxy-D-ribulose 5-phosphate + H(+) = (1S,2R)-1-C-(indol-3-yl)glycerol 3-phosphate + CO2 + H2O. It functions in the pathway amino-acid biosynthesis; L-tryptophan biosynthesis; L-tryptophan from chorismate: step 4/5. This is Indole-3-glycerol phosphate synthase from Neisseria gonorrhoeae (strain ATCC 700825 / FA 1090).